Here is a 363-residue protein sequence, read N- to C-terminus: UDP-N-acetylglucosamine--N-acetylmuramyl-(pentapeptide) pyrophosphoryl-undecaprenol N-acetylglucosamine transferase (363 aa).

UDP-N-acetyl-alpha-D-glucosamine-binding positions include Thr-16–Gly-18, Asn-128, Arg-167, Ser-195, Ile-249, Ala-268–Glu-273, and Gln-294.

The protein belongs to the glycosyltransferase 28 family. MurG subfamily.

The protein localises to the cell inner membrane. It carries out the reaction di-trans,octa-cis-undecaprenyl diphospho-N-acetyl-alpha-D-muramoyl-L-alanyl-D-glutamyl-meso-2,6-diaminopimeloyl-D-alanyl-D-alanine + UDP-N-acetyl-alpha-D-glucosamine = di-trans,octa-cis-undecaprenyl diphospho-[N-acetyl-alpha-D-glucosaminyl-(1-&gt;4)]-N-acetyl-alpha-D-muramoyl-L-alanyl-D-glutamyl-meso-2,6-diaminopimeloyl-D-alanyl-D-alanine + UDP + H(+). The protein operates within cell wall biogenesis; peptidoglycan biosynthesis. Functionally, cell wall formation. Catalyzes the transfer of a GlcNAc subunit on undecaprenyl-pyrophosphoryl-MurNAc-pentapeptide (lipid intermediate I) to form undecaprenyl-pyrophosphoryl-MurNAc-(pentapeptide)GlcNAc (lipid intermediate II). The protein is UDP-N-acetylglucosamine--N-acetylmuramyl-(pentapeptide) pyrophosphoryl-undecaprenol N-acetylglucosamine transferase of Marinobacter nauticus (strain ATCC 700491 / DSM 11845 / VT8) (Marinobacter aquaeolei).